Here is a 255-residue protein sequence, read N- to C-terminus: Phosphatidylcholine synthase (255 aa).

Topologically, residues 1 to 13 (MNPIKPPFTLNQY) are cytoplasmic. The chain crosses the membrane as a helical span at residues 14 to 34 (FAAWFVHVFTASAACIGVFSL). Residues 35–42 (YKIYQHDY) lie on the Periplasmic side of the membrane. Residues 43–63 (VFALWLMAITVFIDAVDGSLA) form a helical membrane-spanning segment. The Cytoplasmic portion of the chain corresponds to 64–76 (RLVHVKSVLPKID). The chain crosses the membrane as a helical span at residues 77–97 (GALLDNIVDYLNYVITPCFFL). Topologically, residues 98 to 103 (LVKPGM) are periplasmic. The helical transmembrane segment at 104-124 (LPADYVVPITAAITITSAYQF) threads the bilayer. The Cytoplasmic segment spans residues 125–133 (CQDDAKTPD). A helical transmembrane segment spans residues 134–154 (HFFKGFPCYWNITVFYMYIFN). Residue threonine 155 is a topological domain, periplasmic. The helical transmembrane segment at 156-175 (SMIVNTVLLSLFCVLIFIPV) threads the bilayer. Residues 176-190 (KYVYPSRLDYLTESR) are Cytoplasmic-facing. A helical membrane pass occupies residues 191 to 211 (VLKILMHCCSALYGISSFCLL). Residues 212 to 217 (VNYPET) lie on the Periplasmic side of the membrane. The helical transmembrane segment at 218–238 (NKLWVSLSLGYVGMYLFLSFY) threads the bilayer. The Cytoplasmic segment spans residues 239–255 (RTYYPMFKAKITANNKD).

It belongs to the CDP-alcohol phosphatidyltransferase class-I family. The cofactor is Mn(2+).

It localises to the cell inner membrane. The enzyme catalyses a CDP-1,2-diacyl-sn-glycerol + choline = a 1,2-diacyl-sn-glycero-3-phosphocholine + CMP + H(+). Condenses choline with CDP-diglyceride to produce phosphatidylcholine and CMP. Affects virulence of this bacterium when there is a complete loss of phosphatidylcholine formation due to absence of both the synthase (pcs) and the methylation (pmtA) pathways. Reduced virulence results from lowered yields of bacteria within host macrophages and because of loss of high multiplicity cytotoxicity. This chain is Phosphatidylcholine synthase, found in Legionella pneumophila subsp. pneumophila (strain Philadelphia 1 / ATCC 33152 / DSM 7513).